The primary structure comprises 202 residues: P25 protein (202 aa).

In terms of domain architecture, Flavodoxin-like spans 7–195; the sequence is VAIVIYSTYG…EIARIQGETF (189 aa). The residue at position 181 (serine 181) is a Phosphoserine.

This sequence belongs to the WrbA family. Homodimer.

Functionally, unknown. Target of pap1 transcription factor. Confers brefeldin A resistance in S.pombe. This Schizosaccharomyces pombe (strain 972 / ATCC 24843) (Fission yeast) protein is P25 protein (obr1).